A 379-amino-acid polypeptide reads, in one-letter code: Oxysterol-binding protein-related protein 4C (379 aa).

The protein belongs to the OSBP family. Expressed in flowers.

In terms of biological role, may be involved in the transport of sterols. The protein is Oxysterol-binding protein-related protein 4C (ORP4C) of Arabidopsis thaliana (Mouse-ear cress).